Consider the following 381-residue polypeptide: Beta-lactamase CMY-2 (381 aa).

The N-terminal stretch at 1 to 20 (MMKKSLCCALLLTASFSTFA) is a signal peptide. Catalysis depends on S84, which acts as the Acyl-ester intermediate. A beta-lactam is bound by residues S84, Q140, Y170, and N172.

Belongs to the class-C beta-lactamase family.

The catalysed reaction is a beta-lactam + H2O = a substituted beta-amino acid. Its activity is regulated as follows. Inhibited by the beta-lactamase-blocking agents sulbactam, tazobactam, avibactam and 3-aminophenylboronic acid (APB). Its function is as follows. Class C beta-lactamase which confers resistance to penicillins and cephalosporins. Has nitrocefin-, cefoxitin- and cefoperazone-hydrolyzing activities. This chain is Beta-lactamase CMY-2, found in Klebsiella pneumoniae.